Here is an 85-residue protein sequence, read N- to C-terminus: Small ribosomal subunit protein bS18 (85 aa).

Residues 1–12 (MAFAQAGGGGGQ) are compositionally biased toward gly residues. The tract at residues 1–22 (MAFAQAGGGGGQRRPFFRRRKT) is disordered.

The protein belongs to the bacterial ribosomal protein bS18 family. In terms of assembly, part of the 30S ribosomal subunit. Forms a tight heterodimer with protein bS6.

Functionally, binds as a heterodimer with protein bS6 to the central domain of the 16S rRNA, where it helps stabilize the platform of the 30S subunit. The protein is Small ribosomal subunit protein bS18 of Azorhizobium caulinodans (strain ATCC 43989 / DSM 5975 / JCM 20966 / LMG 6465 / NBRC 14845 / NCIMB 13405 / ORS 571).